A 634-amino-acid chain; its full sequence is Pescadillo homolog (634 aa).

The 94-residue stretch at 321–414 (RLRTLFKGLK…QLLPTNKYFM (94 aa)) folds into the BRCT domain. Disordered stretches follow at residues 437–473 (EEKA…EEIE), 491–561 (EYKK…RKAE), and 603–634 (NIDA…LKMA). S453 carries the phosphoserine modification. Composition is skewed to acidic residues over residues 454–473 (DDDD…EEIE) and 501–527 (VNED…DVEQ). 2 coiled-coil regions span residues 460 to 546 (SDAE…KVES) and 596 to 629 (LLRK…AAAK). Composition is skewed to basic and acidic residues over residues 528 to 548 (LDDK…ESGK) and 603 to 623 (NIDA…KKAA). A compositionally biased stretch (low complexity) spans 624-634 (AEAAAKALKMA).

This sequence belongs to the pescadillo family.

It localises to the nucleus. It is found in the nucleolus. The protein localises to the nucleoplasm. In terms of biological role, required for maturation of ribosomal RNAs and formation of the large ribosomal subunit. This chain is Pescadillo homolog, found in Drosophila willistoni (Fruit fly).